Consider the following 1596-residue polypeptide: Cellulose synthase 2 (1596 aa).

A catalytic region spans residues 1–749 (MIYRAILKRL…RSARHGATAS (749 aa)). 2 consecutive transmembrane segments (helical) span residues 25–45 (SPFVMMAVGVFLMLMAGGVTI) and 106–126 (LSLLLVAAELYALLTLCLSYF). The catalytic subdomain A stretch occupies residues 145–238 (DWPVVDVYVP…YVVIFDCDHI (94 aa)). Residue Asp-187 is part of the active site. Asp-234 and Asp-236 together coordinate substrate. A catalytic subdomain B region spans residues 315–375 (SAVLGIGGFA…GQRVRWARGM (61 aa)). The active site involves Asp-331. Transmembrane regions (helical) follow at residues 396–416 (LCYLSAMSHFLFAIPRLVFLA), 421–441 (FLFLGQNIIAASPFAILVYAF), 505–525 (FDLNAVYPNVILAVILALALV), and 544–564 (FALNTLWVAVSLIIVLASIAV). Residues 570–669 (QIRHKPRVRA…ERQIVEFMFG (100 aa)) form the PilZ domain. The cyclic di-GMP binding domain stretch occupies residues 750–1596 (LIVLLGLPAA…RVKDTTDASH (847 aa)). 2 disordered regions span residues 769 to 812 (SRAT…IAPA) and 828 to 868 (TGPA…APPI). The span at 783–809 (VEPPPVNAPPPPSLPQPPGTLPTPPQI) shows a compositional bias: pro residues. Residues 1553–1573 (LTLYVLGLVGAGLVAAAAVRL) traverse the membrane as a helical segment.

It in the N-terminal section; belongs to the glycosyltransferase 2 family. The protein in the C-terminal section; belongs to the AcsB/BcsB family.

The protein resides in the cell inner membrane. It carries out the reaction [(1-&gt;4)-beta-D-glucosyl](n) + UDP-alpha-D-glucose = [(1-&gt;4)-beta-D-glucosyl](n+1) + UDP + H(+). The sequence is that of Cellulose synthase 2 (acsAII) from Novacetimonas hansenii (Komagataeibacter hansenii).